The chain runs to 77 residues: Large ribosomal subunit protein uL29 (77 aa).

The protein belongs to the universal ribosomal protein uL29 family.

The chain is Large ribosomal subunit protein uL29 from Mycobacterium sp. (strain JLS).